The primary structure comprises 538 residues: Coiled-coil domain-containing protein 8 (538 aa).

Residues 58–128 are disordered; sequence IMEKSTPHPP…QGPRRGKKVR (71 aa). Over residues 119 to 128 the composition is skewed to basic residues; sequence QGPRRGKKVR. Serine 142, serine 146, and serine 261 each carry phosphoserine. The interval 213 to 473 is disordered; sequence WAPRAGPGVG…GTAPGARARK (261 aa). The span at 301–313 shows a compositional bias: basic and acidic residues; sequence DSQREEAIADQRE. Positions 321-332 are enriched in low complexity; the sequence is AGAPADQGAEAA. Residues 349–366 adopt a coiled-coil conformation; that stretch reads AEEGAEAADNQREEAADN. Composition is skewed to basic and acidic residues over residues 357–373, 381–392, and 405–419; these read DNQR…EAPA, DNHREEAADNQR, and DNQR…RERA. 2 stretches are compositionally biased toward low complexity: residues 428 to 438 and 458 to 469; these read QRAQARAGQRA and AAQGTTGTAPGA. The short motif at 500 to 506 is the PxLPxI/L motif; mediates interaction with ANKRA2 element; the sequence is PRLPTLP. The stretch at 514 to 535 forms a coiled coil; sequence EARNLRVLRAEARAEAEQGEQE.

Component of the 3M complex, composed of core components CUL7, CCDC8 and OBSL1. Interacts (via PxLPxI/L motif) with ANKRA2 (via ankyrin repeats); may link the 3M complex to histone deacetylases including HDAC4 and HDAC5. In terms of tissue distribution, widely expressed with low levels in spleen, skeletal muscle, small intestine, kidney and liver.

The protein resides in the cytoplasm. The protein localises to the cytoskeleton. It is found in the microtubule organizing center. Its subcellular location is the centrosome. In terms of biological role, core component of the 3M complex, a complex required to regulate microtubule dynamics and genome integrity. It is unclear how the 3M complex regulates microtubules, it could act by controlling the level of a microtubule stabilizer. Required for localization of CUL7 to the centrosome. The protein is Coiled-coil domain-containing protein 8 (CCDC8) of Homo sapiens (Human).